A 243-amino-acid chain; its full sequence is Protein IN2-1 homolog A (243 aa).

Residues Gly-31–Ala-112 enclose the GST N-terminal domain. Glutathione is bound by residues Lys-70, Val-84, and Glu-96 to Ser-97. The GST C-terminal domain maps to Asp-117–Leu-240.

This sequence belongs to the GST superfamily. HSP26 family.

This Oryza sativa subsp. japonica (Rice) protein is Protein IN2-1 homolog A.